Consider the following 318-residue polypeptide: Pyrimidine-specific ribonucleoside hydrolase RihA (318 aa).

H240 is a catalytic residue.

This sequence belongs to the IUNH family. RihA subfamily.

Hydrolyzes cytidine or uridine to ribose and cytosine or uracil, respectively. In Shewanella baltica (strain OS155 / ATCC BAA-1091), this protein is Pyrimidine-specific ribonucleoside hydrolase RihA.